A 111-amino-acid polypeptide reads, in one-letter code: Putative protein p34 (111 aa).

In Acyrthosiphon pisum secondary endosymbiont phage 1 (Bacteriophage APSE-1), this protein is Putative protein p34 (34).